A 294-amino-acid polypeptide reads, in one-letter code: MAEISGNGGDARDGAVVVNLKEEDEQQQQQQAIHKPLKKQDSLLSISVPFLQKLMAEVLGTYFLIFAGCAAVAVNTQHDKAVTLPGIAIVWGLTVMVLVYSLGHISGAHFNPAVTIAFASCGRFPLKQVPAYVISQVIGSTLAAATLRLLFGLDQDVCSGKHDVFVGTLPSGSNLQSFVIEFIITFYLMFVISGVATDNRAIGELAGLAVGSTVLLNVIIAGPVSGASMNPGRSLGPAMVYSCYRGLWIYIVSPIVGAVSGAWVYNMVRYTDKPLREITKSGSFLKTVRNGSSR.

Methionine 1 carries the N-acetylmethionine modification. A run of 2 helical transmembrane segments spans residues 54–74 and 82–102; these read LMAE…AVAV and VTLP…VYSL. The NPA 1 signature appears at 111–113; sequence NPA. Helical transmembrane passes span 133-153, 177-197, and 201-221; these read VISQ…LFGL, SFVI…GVAT, and AIGE…VIIA. The short motif at 230 to 232 is the NPA 2 element; sequence NPG. Residues 248–268 traverse the membrane as a helical segment; that stretch reads WIYIVSPIVGAVSGAWVYNMV. Serine 283 is modified (phosphoserine).

This sequence belongs to the MIP/aquaporin (TC 1.A.8) family. NIP (TC 1.A.8.12) subfamily. As to expression, expressed in developing seeds.

It localises to the membrane. Its function is as follows. Water channel probably required to promote glycerol permeability and water transport across cell membranes. The protein is Aquaporin NIP1-2 (NIP1-2) of Arabidopsis thaliana (Mouse-ear cress).